A 943-amino-acid chain; its full sequence is Receptor-like kinase TMK3 (943 aa).

An N-terminal signal peptide occupies residues 1–24; sequence MSNSHLGTLCFIISLLGLANFSLS. Residues 25-482 lie on the Extracellular side of the membrane; sequence QTGLDDSTMQ…ETSKKSSNVK (458 aa). A glycan (N-linked (GlcNAc...) asparagine) is linked at asparagine 41. Cysteines 54 and 61 form a disulfide. LRR repeat units lie at residues 64–88, 89–111, 112–134, 136–160, 162–183, 186–210, 212–232, 233–254, 255–279, and 281–301; these read SNRVTKIQLKQKGIRGTLPTNLQSL, SELVILELFLNRISGPIPDLSGL, SRLQTLNLHDNLFTSVPKNLFSG, SSLQEMYLENNPFDPWVIPDTVKEA, SLQNLTLSNCSIIGKIPDFFGS, LPSLTNLKLSQNGLEGELPMSFAGT, IQSLFLNGQKLNGSISVLGNM, TSLVEVSLQGNQFSGPIPDLSG, LVSLRVFNVRENQLTGVVPQSLVSL, and SLTTVNLTNNYLQGPTPLFGK. Residues asparagine 165 and asparagine 170 are each glycosylated (N-linked (GlcNAc...) asparagine). Asparagine 223 and asparagine 231 each carry an N-linked (GlcNAc...) asparagine glycan. Asparagine 286 carries an N-linked (GlcNAc...) asparagine glycan. Disulfide bonds link cysteine 315-cysteine 323 and cysteine 353-cysteine 361. LRR repeat units lie at residues 363–386, 387–410, and 411–438; these read GGNITVVNMRKQDLSGTISPSLAK, LTSLETINLADNKLSGHIPDELTT, and LSKLRLLDVSNNDFYGIPPKFRDTVTLV. Asparagine 365 carries an N-linked (GlcNAc...) asparagine glycan. The tract at residues 441–476 is disordered; it reads GNANMGKNGPNKTSDAPGASPGSKPSGGSDGSETSK. Asparagine 451 is a glycosylation site (N-linked (GlcNAc...) asparagine). Residues 454–467 are compositionally biased toward low complexity; it reads SDAPGASPGSKPSG. Residues 483–503 form a helical membrane-spanning segment; sequence IIVPVVGGVVGALCLVGLGVC. At 504 to 943 the chain is on the cytoplasmic side; sequence LYAKKRKRPA…ADSFTSVDGR (440 aa). Residues 514–534 are disordered; that stretch reads RVQSPSSNMVIHPHHSGDNDD. The 282-residue stretch at 585-866 folds into the Protein kinase domain; sequence FSEENILGRG…AHIVNVLSSL (282 aa). ATP-binding positions include 591–599 and lysine 613; that span reads LGRGGFGTV. The active-site Proton acceptor is the aspartate 714. The segment at 904-943 is disordered; it reads QTADDSGSSSSAYGSKDNTQTSIPTRPSGFADSFTSVDGR. Over residues 906–918 the composition is skewed to low complexity; the sequence is ADDSGSSSSAYGS. Positions 919–928 are enriched in polar residues; it reads KDNTQTSIPT.

This sequence belongs to the protein kinase superfamily. Ser/Thr protein kinase family. In terms of tissue distribution, expressed in roots, leaves, stems, siliques and flowers.

The protein localises to the membrane. It carries out the reaction L-seryl-[protein] + ATP = O-phospho-L-seryl-[protein] + ADP + H(+). The enzyme catalyses L-threonyl-[protein] + ATP = O-phospho-L-threonyl-[protein] + ADP + H(+). Its function is as follows. Involved in auxin signal transduction and cell expansion and proliferation regulation. In Arabidopsis thaliana (Mouse-ear cress), this protein is Receptor-like kinase TMK3.